The chain runs to 280 residues: Acetylglutamate kinase (280 aa).

Residues 57–58 (GG), Arg79, and Asn174 each bind substrate.

It belongs to the acetylglutamate kinase family. ArgB subfamily.

It localises to the cytoplasm. It catalyses the reaction N-acetyl-L-glutamate + ATP = N-acetyl-L-glutamyl 5-phosphate + ADP. It functions in the pathway amino-acid biosynthesis; L-arginine biosynthesis; N(2)-acetyl-L-ornithine from L-glutamate: step 2/4. In terms of biological role, catalyzes the ATP-dependent phosphorylation of N-acetyl-L-glutamate. The sequence is that of Acetylglutamate kinase from Helicobacter hepaticus (strain ATCC 51449 / 3B1).